The primary structure comprises 435 residues: Endoglucanase EG-1 (435 aa).

The N-terminal stretch at Met-1–Gly-20 is a signal peptide. Gln-21 carries the pyrrolidone carboxylic acid modification. Cystine bridges form between Cys-38–Cys-44, Cys-71–Cys-93, and Cys-83–Cys-89. The N-linked (GlcNAc...) asparagine glycan is linked to Asn-109. Disulfide bonds link Cys-160-Cys-385, Cys-192-Cys-215, Cys-196-Cys-214, Cys-235-Cys-254, Cys-243-Cys-248, and Cys-259-Cys-335. The Nucleophile role is filled by Glu-217. Residue Glu-222 is the Proton donor of the active site. Asn-267 carries an N-linked (GlcNAc...) asparagine glycan.

The protein belongs to the glycosyl hydrolase 7 (cellulase C) family.

The protein localises to the secreted. It carries out the reaction Endohydrolysis of (1-&gt;4)-beta-D-glucosidic linkages in cellulose, lichenin and cereal beta-D-glucans.. Its function is as follows. The biological conversion of cellulose to glucose generally requires three types of hydrolytic enzymes: (1) Endoglucanases which cut internal beta-1,4-glucosidic bonds; (2) Exocellobiohydrolases that cut the disaccharide cellobiose from the non-reducing end of the cellulose polymer chain; (3) Beta-1,4-glucosidases which hydrolyze the cellobiose and other short cello-oligosaccharides to glucose. This chain is Endoglucanase EG-1 (EG-1), found in Humicola insolens (Soft-rot fungus).